The following is a 195-amino-acid chain: Ferredoxin-2, mitochondrial (195 aa).

Residues 1–61 constitute a mitochondrion transit peptide; that stretch reads MAAAAAVRAG…RRLRTSIGVC (61 aa). Residues 81–182 form the 2Fe-2S ferredoxin-type domain; it reads NVVYIDRSGR…GMELTLPKVT (102 aa). [2Fe-2S] cluster is bound by residues Cys117, Cys123, Cys126, and Cys163.

Belongs to the adrenodoxin/putidaredoxin family. Component of the mitochondrial core iron-sulfur cluster (ISC) complex composed of NFS1, LYRM4, NDUFAB1, ISCU, FXN, and FDX2; this complex is a heterohexamer containing two copies of each monomer. Form a heterodimer complex with NFS1. [2Fe-2S] cluster is required as a cofactor.

It is found in the mitochondrion. The protein resides in the mitochondrion matrix. Electron donor, of the core iron-sulfur cluster (ISC) assembly complex, that acts to reduce the persulfide into sulfide during [2Fe-2S] clusters assembly on the scaffolding protein ISCU. The core iron-sulfur cluster (ISC) assembly complex is involved in the de novo synthesis of a [2Fe-2S] cluster, the first step of the mitochondrial iron-sulfur protein biogenesis. This process is initiated by the cysteine desulfurase complex (NFS1:LYRM4:NDUFAB1) that produces persulfide which is delivered on the scaffold protein ISCU in a FXN-dependent manner. Then this complex is stabilized by FDX2 which provides reducing equivalents to accomplish the [2Fe-2S] cluster assembly. Finally, the [2Fe-2S] cluster is transferred from ISCU to chaperone proteins, including HSCB, HSPA9 and GLRX5. Essential for coenzyme Q biosynthesis: together with FDXR, transfers the electrons required for the hydroxylation reaction performed by COQ6. The chain is Ferredoxin-2, mitochondrial from Danio rerio (Zebrafish).